A 91-amino-acid polypeptide reads, in one-letter code: Putative regulatory protein PTH_1796 (91 aa).

Belongs to the RemA family.

This Pelotomaculum thermopropionicum (strain DSM 13744 / JCM 10971 / SI) protein is Putative regulatory protein PTH_1796.